Here is a 1068-residue protein sequence, read N- to C-terminus: Phosphatidylinositol 4,5-bisphosphate 3-kinase catalytic subunit alpha isoform (1068 aa).

The 90-residue stretch at 16–105 (MPPRILVECL…QPFLKVIEPV (90 aa)) folds into the PI3K-ABD domain. A PI3K-RBD domain is found at 187 to 289 (KGQIIVVIWV…GRMPNLMLMA (103 aa)). The region spanning 330-487 (INSALRIKIL…DWFSSVVKFP (158 aa)) is the C2 PI3K-type domain. The 178-residue stretch at 517 to 694 (LARDNELREN…GLLLESYCRA (178 aa)) folds into the PIK helical domain. The region spanning 765–1051 (RLEECRIMSS…QMNDAHHGGW (287 aa)) is the PI3K/PI4K catalytic domain. Residues 771 to 777 (IMSSAKR) are G-loop. The segment at 912-920 (GIGDRHNSN) is catalytic loop. An activation loop region spans residues 931 to 957 (HIDFGHFLDHKKKKFGYKRERVPFVLT).

This sequence belongs to the PI3/PI4-kinase family. Heterodimer of a catalytic subunit PIK3CA and a p85 regulatory subunit (PIK3R1, PIK3R2 or PIK3R3). Interacts with IRS1 in nuclear extracts. Interacts with RUFY3. Interacts with RASD2. Interacts with APPL1. Interacts with HRAS and KRAS. Interaction with HRAS/KRAS is required for PI3K pathway signaling and cell proliferation stimulated by EGF and FGF2. Interacts with FAM83B; activates the PI3K/AKT signaling cascade.

The catalysed reaction is L-seryl-[protein] + ATP = O-phospho-L-seryl-[protein] + ADP + H(+). It catalyses the reaction a 1,2-diacyl-sn-glycero-3-phospho-(1D-myo-inositol) + ATP = a 1,2-diacyl-sn-glycero-3-phospho-(1D-myo-inositol-3-phosphate) + ADP + H(+). The enzyme catalyses a 1,2-diacyl-sn-glycero-3-phospho-(1D-myo-inositol-4,5-bisphosphate) + ATP = a 1,2-diacyl-sn-glycero-3-phospho-(1D-myo-inositol-3,4,5-trisphosphate) + ADP + H(+). It carries out the reaction 1,2-dioctanoyl-sn-glycero-3-phospho-(1D-myo-inositol-4,5-bisphosphate) + ATP = 1,2-dioctanoyl-sn-glycero-3-phospho-(1D-myo-inositol-3,4,5-trisphosphate) + ADP + H(+). The catalysed reaction is 1-octadecanoyl-2-(5Z,8Z,11Z,14Z)-eicosatetraenoyl-sn-glycero-3-phospho-1D-myo-inositol 4,5-bisphosphate + ATP = 1-octadecanoyl-2-(5Z,8Z,11Z,14Z-eicosatetraenoyl)-sn-glycero-3-phospho-(1D-myo-inositol 3,4,5-triphosphate) + ADP + H(+). The protein operates within phospholipid metabolism; phosphatidylinositol phosphate biosynthesis. Phosphoinositide-3-kinase (PI3K) phosphorylates phosphatidylinositol (PI) and its phosphorylated derivatives at position 3 of the inositol ring to produce 3-phosphoinositides. Uses ATP and PtdIns(4,5)P2 (phosphatidylinositol 4,5-bisphosphate) to generate phosphatidylinositol 3,4,5-trisphosphate (PIP3). PIP3 plays a key role by recruiting PH domain-containing proteins to the membrane, including AKT1 and PDPK1, activating signaling cascades involved in cell growth, survival, proliferation, motility and morphology. Participates in cellular signaling in response to various growth factors. Involved in the activation of AKT1 upon stimulation by receptor tyrosine kinases ligands such as EGF, insulin, IGF1, VEGFA and PDGF. Involved in signaling via insulin-receptor substrate (IRS) proteins. Essential in endothelial cell migration during vascular development through VEGFA signaling, possibly by regulating RhoA activity. Required for lymphatic vasculature development, possibly by binding to RAS and by activation by EGF and FGF2, but not by PDGF. Regulates invadopodia formation through the PDPK1-AKT1 pathway. Participates in cardiomyogenesis in embryonic stem cells through a AKT1 pathway. Participates in vasculogenesis in embryonic stem cells through PDK1 and protein kinase C pathway. In addition to its lipid kinase activity, it displays a serine-protein kinase activity that results in the autophosphorylation of the p85alpha regulatory subunit as well as phosphorylation of other proteins such as 4EBP1, H-Ras, the IL-3 beta c receptor and possibly others. Plays a role in the positive regulation of phagocytosis and pinocytosis. This Bos taurus (Bovine) protein is Phosphatidylinositol 4,5-bisphosphate 3-kinase catalytic subunit alpha isoform (PIK3CA).